Reading from the N-terminus, the 1007-residue chain is SUPPRESSOR OF ABI3-5 (1007 aa).

2 disordered regions span residues 1 to 185 (MDPS…RDRE) and 204 to 269 (ESPH…FSAT). 4 stretches are compositionally biased toward basic and acidic residues: residues 40 to 49 (PDERLMRDDV), 94 to 120 (YYHDSEAGSRNGHYRDHEHERSSRYDG), 138 to 185 (HSRD…RDRE), and 204 to 214 (ESPHKRYEKSR). A compositionally biased stretch (basic residues) spans 227-236 (RSPRGRSHGR). Positions 237–264 (SYREDSYEGDHWNESERRREYEDRHNQD) are enriched in basic and acidic residues. The region spanning 272–352 (ATVVVKGLSM…RKLMFHYSQP (81 aa)) is the RRM 1 domain. The RanBP2-type zinc finger occupies 378-407 (VPTDWICTICGCINFARRTSCFQCNEPKTK). The RRM 2 domain occupies 432–512 (HVLVVRGLDE…KILRVAYAKS (81 aa)). 6 disordered regions span residues 556-581 (GEKQNTGGQAQGVGEIESQKGTSAPQ), 631-656 (PDQNNESKVTENQPDSAKKEKSSQQK), 725-755 (HETQIQRPSPSLGDNPPTVSAEARSSFSTGQ), 771-797 (STSNHGVSALTTAESSSSSTTGGTLMG), 810-910 (ASSS…GITT), and 945-977 (SGLGKDGSGMKEPVQAQGVDRRAGLGSQQKKVD). Over residues 631-645 (PDQNNESKVTENQPD) the composition is skewed to polar residues. Low complexity-rich tracts occupy residues 778–793 (SALTTAESSSSSTTGG) and 823–835 (PSASPASVSVSGS). Residues 849-867 (THREQPQTSYRDRAAERRN) show a composition bias toward basic and acidic residues. The G-patch domain occupies 928-974 (ESNVGNRMLRNMGWHEGSGLGKDGSGMKEPVQAQGVDRRAGLGSQQK).

As to quaternary structure, interacts with the pre-spliceosomal component U2AF65A. As to expression, ubiquitous with highest expression in siliques toward the end of seed maturation.

It is found in the nucleus. Its function is as follows. Splicing factor that controls alternative splicing of the developmental regulator ABI3. Reduces splicing of a cryptic intron in ABI3, leading to a decreased in ABI3-beta transcript. Regulates the splicing of the receptor-like kinase SNC4/LRKL-2.6. This Arabidopsis thaliana (Mouse-ear cress) protein is SUPPRESSOR OF ABI3-5.